Here is a 118-residue protein sequence, read N- to C-terminus: Ribonuclease P protein component (118 aa).

This sequence belongs to the RnpA family. As to quaternary structure, consists of a catalytic RNA component (M1 or rnpB) and a protein subunit.

It catalyses the reaction Endonucleolytic cleavage of RNA, removing 5'-extranucleotides from tRNA precursor.. Its function is as follows. RNaseP catalyzes the removal of the 5'-leader sequence from pre-tRNA to produce the mature 5'-terminus. It can also cleave other RNA substrates such as 4.5S RNA. The protein component plays an auxiliary but essential role in vivo by binding to the 5'-leader sequence and broadening the substrate specificity of the ribozyme. The sequence is that of Ribonuclease P protein component from Ureaplasma urealyticum serovar 10 (strain ATCC 33699 / Western).